The sequence spans 350 residues: tRNA N6-adenosine threonylcarbamoyltransferase (350 aa).

His-117 and His-121 together coordinate Fe cation. Substrate-binding positions include 140–144 (LVSGG), Asp-173, Gly-186, and Asn-277. Asp-305 provides a ligand contact to Fe cation.

Belongs to the KAE1 / TsaD family. Requires Fe(2+) as cofactor.

It is found in the cytoplasm. The catalysed reaction is L-threonylcarbamoyladenylate + adenosine(37) in tRNA = N(6)-L-threonylcarbamoyladenosine(37) in tRNA + AMP + H(+). Its function is as follows. Required for the formation of a threonylcarbamoyl group on adenosine at position 37 (t(6)A37) in tRNAs that read codons beginning with adenine. Is involved in the transfer of the threonylcarbamoyl moiety of threonylcarbamoyl-AMP (TC-AMP) to the N6 group of A37, together with TsaE and TsaB. TsaD likely plays a direct catalytic role in this reaction. The chain is tRNA N6-adenosine threonylcarbamoyltransferase from Novosphingobium aromaticivorans (strain ATCC 700278 / DSM 12444 / CCUG 56034 / CIP 105152 / NBRC 16084 / F199).